The primary structure comprises 195 residues: MIDNNVKNNIDESTLQNEKIEKEELLESVSTVDNVIDPKNDQIIKLKIQLAQLQEHERNTVLRLTAEIENIRRRNTQEIEKIHKFGLERFIFELLPVIDNLERTMSISDNSNTLLSAIIEGIELTLKSFLDTVHKFGLKSIYEINVPFNPEIHQAISIIESEDHKPNQVLTMIQKGYILNGRLIRPAMVTVSQSK.

It belongs to the GrpE family. As to quaternary structure, homodimer.

The protein localises to the cytoplasm. In terms of biological role, participates actively in the response to hyperosmotic and heat shock by preventing the aggregation of stress-denatured proteins, in association with DnaK and GrpE. It is the nucleotide exchange factor for DnaK and may function as a thermosensor. Unfolded proteins bind initially to DnaJ; upon interaction with the DnaJ-bound protein, DnaK hydrolyzes its bound ATP, resulting in the formation of a stable complex. GrpE releases ADP from DnaK; ATP binding to DnaK triggers the release of the substrate protein, thus completing the reaction cycle. Several rounds of ATP-dependent interactions between DnaJ, DnaK and GrpE are required for fully efficient folding. This chain is Protein GrpE, found in Blochmanniella pennsylvanica (strain BPEN).